We begin with the raw amino-acid sequence, 88 residues long: Small ribosomal subunit protein uS15 (88 aa).

The protein belongs to the universal ribosomal protein uS15 family. Part of the 30S ribosomal subunit. Forms a bridge to the 50S subunit in the 70S ribosome, contacting the 23S rRNA.

In terms of biological role, one of the primary rRNA binding proteins, it binds directly to 16S rRNA where it helps nucleate assembly of the platform of the 30S subunit by binding and bridging several RNA helices of the 16S rRNA. Functionally, forms an intersubunit bridge (bridge B4) with the 23S rRNA of the 50S subunit in the ribosome. In Geotalea daltonii (strain DSM 22248 / JCM 15807 / FRC-32) (Geobacter daltonii), this protein is Small ribosomal subunit protein uS15.